A 510-amino-acid chain; its full sequence is Pre-glycoprotein polyprotein GP complex (510 aa).

Glycine 2 is lipidated: N-myristoyl glycine; by host. Over 2–17 the chain is Extracellular; sequence GQFITLMQSIPEALNM. A helical membrane pass occupies residues 18-32; that stretch reads AFNVALVIVSLLCVT. Position 33 (lysine 33) is a topological domain, cytoplasmic. Residues 34–53 form a helical membrane-spanning segment; sequence GLINLWKCGIIQLLMFLALA. Extracellular loops occupy residues 54-58 and 59-448; these read GRSCD and GEYK…ALAD. Zn(2+) is bound at residue cysteine 57. Residues asparagine 75, asparagine 90, asparagine 101, asparagine 112, asparagine 117, asparagine 122, asparagine 133, asparagine 182, asparagine 218, and asparagine 243 are each glycosylated (N-linked (GlcNAc...) asparagine; by host). Cystine bridges form between cysteine 87/cysteine 250, cysteine 295/cysteine 308, cysteine 317/cysteine 326, and cysteine 380/cysteine 401. Residues asparagine 381, asparagine 389, asparagine 406, and asparagine 411 are each glycosylated (N-linked (GlcNAc...) asparagine; by host). Residues 449–469 traverse the membrane as a helical segment; it reads LCFWSLVFFTTTVFFQLIGIP. At 470 to 510 the chain is on the cytoplasmic side; sequence THRHLIGEGCPKPHRLTSNSLCSCGFYKIPKKPFRWVRKGK. Zn(2+) contacts are provided by histidine 471, histidine 473, cysteine 479, histidine 483, cysteine 491, and cysteine 493.

This sequence belongs to the arenaviridae GPC protein family. Homotetramer; disulfide-linked. In terms of assembly, homotetramer. GP2 homotetramers bind through ionic interactions with GP1 homotetramers to form the GP complex together with the stable signal peptide. The GP-C polyprotein interacts with the host protease MBTPS1/SKI-1 resulting in the polyprotein processing. Post-translationally, specific enzymatic cleavages in vivo yield mature proteins. GP-C polyprotein is cleaved in the endoplasmic reticulum by the host protease MBTPS1. Only cleaved glycoprotein is incorporated into virions. The SSP remains stably associated with the GP complex following cleavage by signal peptidase and plays crucial roles in the trafficking of GP through the secretory pathway. In terms of processing, myristoylation is necessary for GP2-mediated fusion activity.

The protein localises to the virion membrane. It localises to the host endoplasmic reticulum membrane. Its subcellular location is the host Golgi apparatus membrane. It is found in the host cell membrane. Functionally, class I viral fusion protein that directs fusion of viral and host endosomal membranes, leading to delivery of the nucleocapsid into the cytoplasm. Membrane fusion is mediated by irreversible conformational changes induced upon acidification in the endosome. Its function is as follows. Stable signal peptide (SSP): cleaved and functions as a signal peptide. In addition, it is also retained as the third component of the GP complex. The SSP is required for efficient glycoprotein expression, post-translational maturation cleavage of GP1 and GP2, glycoprotein transport to the cell surface plasma membrane, formation of infectious virus particles, and acid pH-dependent glycoprotein-mediated cell fusion. Interacts with the host receptor. The polypeptide is Pre-glycoprotein polyprotein GP complex (Pirital mammarenavirus (isolate Rat/Venezuela/VAV-488/1995) (PIRV)).